The chain runs to 420 residues: L-glutamine:2-deoxy-scyllo-inosose aminotransferase (420 aa).

Position 201 is an N6-(pyridoxal phosphate)lysine (lysine 201).

It belongs to the DegT/DnrJ/EryC1 family. L-glutamine:2-deoxy-scyllo-inosose/scyllo-inosose aminotransferase subfamily. It depends on pyridoxal 5'-phosphate as a cofactor.

The enzyme catalyses 2-deoxy-L-scyllo-inosose + L-glutamine = 2-deoxy-scyllo-inosamine + 2-oxoglutaramate. It carries out the reaction 3-amino-2,3-dideoxy-scyllo-inosose + L-glutamine = 2-deoxystreptamine + 2-oxoglutaramate. Its pathway is metabolic intermediate biosynthesis; 2-deoxystreptamine biosynthesis; 2-deoxystreptamine from D-glucose 6-phosphate: step 2/4. It functions in the pathway antibiotic biosynthesis; gentamicin biosynthesis. Functionally, catalyzes the PLP-dependent transamination of 2-deoxy-scyllo-inosose (2-DOI) to form 2-deoxy-scyllo-inosamine (2-DOIA) using L-glutamine as the amino donor. Also catalyzes the transamination of 3-amino-2,3-dideoxy-scyllo-inosose (keto-2-DOIA) into 2-deoxystreptamine (2-DOS). The chain is L-glutamine:2-deoxy-scyllo-inosose aminotransferase (gntA) from Micromonospora echinospora (Micromonospora purpurea).